Here is an 86-residue protein sequence, read N- to C-terminus: Small ribosomal subunit protein uS15 (86 aa).

Belongs to the universal ribosomal protein uS15 family. In terms of assembly, part of the 30S ribosomal subunit. Forms a bridge to the 50S subunit in the 70S ribosome, contacting the 23S rRNA.

Its function is as follows. One of the primary rRNA binding proteins, it binds directly to 16S rRNA where it helps nucleate assembly of the platform of the 30S subunit by binding and bridging several RNA helices of the 16S rRNA. In terms of biological role, forms an intersubunit bridge (bridge B4) with the 23S rRNA of the 50S subunit in the ribosome. This is Small ribosomal subunit protein uS15 from Mycoplasma pneumoniae (strain ATCC 29342 / M129 / Subtype 1) (Mycoplasmoides pneumoniae).